The chain runs to 195 residues: dTDP-4-dehydrorhamnose 3,5-epimerase (195 aa).

Substrate contacts are provided by residues arginine 31, glutamate 36, 54–56 (QDN), and arginine 67. Histidine 70 (proton acceptor) is an active-site residue. Residues lysine 80 and histidine 127 each coordinate substrate. The active-site Proton donor is the tyrosine 140. Substrate contacts are provided by aspartate 151 and lysine 176.

It belongs to the dTDP-4-dehydrorhamnose 3,5-epimerase family. In terms of assembly, homodimer.

It carries out the reaction dTDP-4-dehydro-6-deoxy-alpha-D-glucose = dTDP-4-dehydro-beta-L-rhamnose. The protein operates within carbohydrate biosynthesis; dTDP-L-rhamnose biosynthesis. Catalyzes the epimerization of the C3' and C5'positions of dTDP-6-deoxy-D-xylo-4-hexulose, forming dTDP-6-deoxy-L-lyxo-4-hexulose. This chain is dTDP-4-dehydrorhamnose 3,5-epimerase, found in Sinorhizobium fredii (strain NBRC 101917 / NGR234).